The sequence spans 312 residues: tRNA dimethylallyltransferase (312 aa).

15 to 22 (GPTAAGKS) contacts ATP. Residue 17 to 22 (TAAGKS) participates in substrate binding. An interaction with substrate tRNA region spans residues 40–43 (DSMQ).

The protein belongs to the IPP transferase family. In terms of assembly, monomer. The cofactor is Mg(2+).

It catalyses the reaction adenosine(37) in tRNA + dimethylallyl diphosphate = N(6)-dimethylallyladenosine(37) in tRNA + diphosphate. Functionally, catalyzes the transfer of a dimethylallyl group onto the adenine at position 37 in tRNAs that read codons beginning with uridine, leading to the formation of N6-(dimethylallyl)adenosine (i(6)A). The sequence is that of tRNA dimethylallyltransferase from Streptomyces coelicolor (strain ATCC BAA-471 / A3(2) / M145).